A 365-amino-acid chain; its full sequence is Chaperone protein DnaJ (365 aa).

Positions 4-70 constitute a J domain; sequence DYYKILGVDR…EKRRIYDQTG (67 aa). The CR-type zinc-finger motif lies at 139–220; it reads GTEKRIKFRR…CNGTGTIVVD (82 aa). Zn(2+)-binding residues include Cys152, Cys155, Cys168, Cys171, Cys194, Cys197, Cys208, and Cys211. CXXCXGXG motif repeat units lie at residues 152 to 159, 168 to 175, 194 to 201, and 208 to 215; these read CPDCKGTG, CPTCHGTG, CNTCGGKG, and CPRCNGTG.

It belongs to the DnaJ family. As to quaternary structure, homodimer. Zn(2+) is required as a cofactor.

The protein localises to the cytoplasm. In terms of biological role, participates actively in the response to hyperosmotic and heat shock by preventing the aggregation of stress-denatured proteins and by disaggregating proteins, also in an autonomous, DnaK-independent fashion. Unfolded proteins bind initially to DnaJ; upon interaction with the DnaJ-bound protein, DnaK hydrolyzes its bound ATP, resulting in the formation of a stable complex. GrpE releases ADP from DnaK; ATP binding to DnaK triggers the release of the substrate protein, thus completing the reaction cycle. Several rounds of ATP-dependent interactions between DnaJ, DnaK and GrpE are required for fully efficient folding. Also involved, together with DnaK and GrpE, in the DNA replication of plasmids through activation of initiation proteins. This chain is Chaperone protein DnaJ, found in Thermoplasma volcanium (strain ATCC 51530 / DSM 4299 / JCM 9571 / NBRC 15438 / GSS1).